A 136-amino-acid polypeptide reads, in one-letter code: Large ribosomal subunit protein uL16 (136 aa).

The protein belongs to the universal ribosomal protein uL16 family. Part of the 50S ribosomal subunit.

Binds 23S rRNA and is also seen to make contacts with the A and possibly P site tRNAs. The protein is Large ribosomal subunit protein uL16 of Proteus mirabilis (strain HI4320).